Reading from the N-terminus, the 85-residue chain is Small ribosomal subunit protein bS20 (85 aa).

It belongs to the bacterial ribosomal protein bS20 family.

Binds directly to 16S ribosomal RNA. The chain is Small ribosomal subunit protein bS20 from Borrelia hermsii (strain HS1 / DAH).